Consider the following 1452-residue polypeptide: Receptor-type tyrosine-protein phosphatase mu (1452 aa).

The N-terminal stretch at 1–20 (MRGLGTCLATLAGLLLTAAG) is a signal peptide. Residues 21–742 (ETFSGGCLFD…PEKQTDHTVK (722 aa)) lie on the Extracellular side of the membrane. One can recognise an MAM domain in the interval 22–184 (TFSGGCLFDE…VKVLGHPCTR (163 aa)). Cysteine 27 and cysteine 36 are joined by a disulfide. Residues asparagine 72, asparagine 92, asparagine 131, and asparagine 249 are each glycosylated (N-linked (GlcNAc...) asparagine). Cystine bridges form between cysteine 96-cysteine 182 and cysteine 206-cysteine 260. In terms of domain architecture, Ig-like C2-type spans 186–277 (PHFLRIQNVE…VGISNYAELV (92 aa)). Fibronectin type-III domains follow at residues 284-379 (PIAP…CADP), 382-480 (GPRK…TDED), 482-587 (PGAV…SAPS), and 589-671 (PAYE…DSLQ). 8 N-linked (GlcNAc...) asparagine glycosylation sites follow: asparagine 406, asparagine 414, asparagine 454, asparagine 534, asparagine 544, asparagine 598, asparagine 651, and asparagine 681. Residues 743 to 764 (IAGVIAGILLFVIIFLGVVLVM) form a helical membrane-spanning segment. The Cytoplasmic portion of the chain corresponds to 765–1452 (KKRKLAKKRK…EVALEYLNSG (688 aa)). A Phosphoserine modification is found at serine 821. Tyrosine-protein phosphatase domains lie at 900–1154 (FKEE…ILEA) and 1186–1448 (IKEE…ALEY). Residues aspartate 1063, 1095-1101 (CSAGAGR), and glutamine 1139 contribute to the substrate site. Cysteine 1095 functions as the Phosphocysteine intermediate in the catalytic mechanism. The Phosphocysteine intermediate role is filled by cysteine 1389.

It belongs to the protein-tyrosine phosphatase family. Receptor class 2B subfamily. Homodimer.

It localises to the cell membrane. It catalyses the reaction O-phospho-L-tyrosyl-[protein] + H2O = L-tyrosyl-[protein] + phosphate. Receptor protein-tyrosine phosphatase that mediates homotypic cell-cell interactions and plays a role in adipogenic differentiation via modulation of p120 catenin/CTNND1 phosphorylation. Promotes CTNND1 dephosphorylation and prevents its cytoplasmic localization where it inhibits SLC2A4 membrane trafficking. In turn, SLC2A4 is directed to the plasma membrane and performs its glucose transporter function. In Homo sapiens (Human), this protein is Receptor-type tyrosine-protein phosphatase mu (PTPRM).